Reading from the N-terminus, the 439-residue chain is Probable aspartic-type endopeptidase AFUA_3G01220 (439 aa).

Residues 1–20 (MHFSIGSLFLYLIASASCTA) form the signal peptide. The tract at residues 31–50 (RTPFTTSTSKPSAFTNPSTD) is disordered. Positions 32–45 (TPFTTSTSKPSAFT) are enriched in low complexity. Residues 95–436 (FATSINIGNQ…DVGAAEMRFA (342 aa)) enclose the Peptidase A1 domain. Residue Asn103 is glycosylated (N-linked (GlcNAc...) asparagine). Asp111 is a catalytic residue. Asn149, Asn178, Asn187, Asn253, Asn256, Asn276, and Asn308 each carry an N-linked (GlcNAc...) asparagine glycan. The active site involves Asp323. Asn361 and Asn394 each carry an N-linked (GlcNAc...) asparagine glycan.

It belongs to the peptidase A1 family.

It is found in the secreted. Functionally, probable aspartic-type endopeptidase which contributes to virulence. This is Probable aspartic-type endopeptidase AFUA_3G01220 from Aspergillus fumigatus (strain ATCC MYA-4609 / CBS 101355 / FGSC A1100 / Af293) (Neosartorya fumigata).